The chain runs to 319 residues: Probable murein peptide carboxypeptidase (319 aa).

Catalysis depends on Ser-116, which acts as the Nucleophile. Catalysis depends on charge relay system residues Glu-214 and His-284.

The protein belongs to the peptidase S66 family.

It localises to the cytoplasm. It participates in cell wall degradation; peptidoglycan degradation. Its function is as follows. May be involved in the degradation of peptidoglycan by catalyzing the cleavage of the terminal D-alanine residue from cytoplasmic murein peptides. The protein is Probable murein peptide carboxypeptidase (ykfA) of Bacillus subtilis (strain 168).